Consider the following 340-residue polypeptide: Ribosomal RNA large subunit methyltransferase F (340 aa).

The protein belongs to the methyltransferase superfamily. METTL16/RlmF family.

It is found in the cytoplasm. The enzyme catalyses adenosine(1618) in 23S rRNA + S-adenosyl-L-methionine = N(6)-methyladenosine(1618) in 23S rRNA + S-adenosyl-L-homocysteine + H(+). In terms of biological role, specifically methylates the adenine in position 1618 of 23S rRNA. The protein is Ribosomal RNA large subunit methyltransferase F of Dechloromonas aromatica (strain RCB).